A 447-amino-acid chain; its full sequence is Na(+)-translocating NADH-quinone reductase subunit A (447 aa).

The protein belongs to the NqrA family. As to quaternary structure, composed of six subunits; NqrA, NqrB, NqrC, NqrD, NqrE and NqrF.

It carries out the reaction a ubiquinone + n Na(+)(in) + NADH + H(+) = a ubiquinol + n Na(+)(out) + NAD(+). NQR complex catalyzes the reduction of ubiquinone-1 to ubiquinol by two successive reactions, coupled with the transport of Na(+) ions from the cytoplasm to the periplasm. NqrA to NqrE are probably involved in the second step, the conversion of ubisemiquinone to ubiquinol. The chain is Na(+)-translocating NADH-quinone reductase subunit A from Neisseria meningitidis serogroup B (strain ATCC BAA-335 / MC58).